The primary structure comprises 329 residues: GTPase Obg (329 aa).

One can recognise an Obg domain in the interval 1–159; it reads MQFIDQARIT…WFLQLELKLL (159 aa). The OBG-type G domain occupies 160-328; the sequence is AEVGIIGLPN…LLAQVWKELG (169 aa). ATP-binding positions include 166 to 173, 191 to 195, 213 to 216, 280 to 283, and 309 to 311; these read GLPNAGKS, FTTLV, DIPG, NKQE, and SAA. Mg(2+) contacts are provided by serine 173 and threonine 193.

It belongs to the TRAFAC class OBG-HflX-like GTPase superfamily. OBG GTPase family. As to quaternary structure, monomer. The cofactor is Mg(2+).

The protein resides in the cytoplasm. Its function is as follows. An essential GTPase which binds GTP, GDP and possibly (p)ppGpp with moderate affinity, with high nucleotide exchange rates and a fairly low GTP hydrolysis rate. Plays a role in control of the cell cycle, stress response, ribosome biogenesis and in those bacteria that undergo differentiation, in morphogenesis control. This is GTPase Obg from Prochlorococcus marinus (strain MIT 9313).